The sequence spans 115 residues: Large ribosomal subunit protein bL20 (115 aa).

It belongs to the bacterial ribosomal protein bL20 family.

Functionally, binds directly to 23S ribosomal RNA and is necessary for the in vitro assembly process of the 50S ribosomal subunit. It is not involved in the protein synthesizing functions of that subunit. The polypeptide is Large ribosomal subunit protein bL20 (Myxococcus xanthus (strain DK1622)).